A 138-amino-acid chain; its full sequence is Nucleoside diphosphate kinase (138 aa).

The ATP site is built by K10, F58, R86, T92, R103, and N113. H116 serves as the catalytic Pros-phosphohistidine intermediate.

Belongs to the NDK family. As to quaternary structure, homotetramer. Mg(2+) is required as a cofactor.

It localises to the cytoplasm. It carries out the reaction a 2'-deoxyribonucleoside 5'-diphosphate + ATP = a 2'-deoxyribonucleoside 5'-triphosphate + ADP. The enzyme catalyses a ribonucleoside 5'-diphosphate + ATP = a ribonucleoside 5'-triphosphate + ADP. Functionally, major role in the synthesis of nucleoside triphosphates other than ATP. The ATP gamma phosphate is transferred to the NDP beta phosphate via a ping-pong mechanism, using a phosphorylated active-site intermediate. This chain is Nucleoside diphosphate kinase, found in Actinobacillus pleuropneumoniae serotype 7 (strain AP76).